The primary structure comprises 367 residues: NADH-quinone oxidoreductase subunit D (367 aa).

It belongs to the complex I 49 kDa subunit family. As to quaternary structure, NDH-1 is composed of 14 different subunits. Subunits NuoB, C, D, E, F, and G constitute the peripheral sector of the complex.

Its subcellular location is the cell membrane. It catalyses the reaction a quinone + NADH + 5 H(+)(in) = a quinol + NAD(+) + 4 H(+)(out). In terms of biological role, NDH-1 shuttles electrons from NADH, via FMN and iron-sulfur (Fe-S) centers, to quinones in the respiratory chain. The immediate electron acceptor for the enzyme in this species is believed to be ubiquinone. Couples the redox reaction to proton translocation (for every two electrons transferred, four hydrogen ions are translocated across the cytoplasmic membrane), and thus conserves the redox energy in a proton gradient. This chain is NADH-quinone oxidoreductase subunit D, found in Dehalococcoides mccartyi (strain CBDB1).